We begin with the raw amino-acid sequence, 325 residues long: Heat-inducible transcription repressor HrcA (325 aa).

This sequence belongs to the HrcA family.

In terms of biological role, negative regulator of class I heat shock genes (grpE-dnaK-dnaJ and groELS operons). Prevents heat-shock induction of these operons. This is Heat-inducible transcription repressor HrcA from Staphylococcus epidermidis (strain ATCC 35984 / DSM 28319 / BCRC 17069 / CCUG 31568 / BM 3577 / RP62A).